Consider the following 292-residue polypeptide: Cholesterol ring-cleaving hydrolase IpdA subunit (292 aa).

Belongs to the 3-oxoacid CoA-transferase subunit A family. As to quaternary structure, heterotetramer composed of 2 IpdA subunits and 2 IpdB subunits.

The enzyme catalyses (3E)-2-(2-carboxylatoethyl)-3-methyl-6-oxocyclohex-1-ene-1-carboxyl-CoA + H2O = 6-methyl-3,7-dioxodecanedioyl-CoA. It participates in steroid metabolism; cholesterol degradation. Involved in the final steps of cholesterol and steroid degradation. Opens the last steroid ring of cholesterol by catalyzing the hydrolysis of (3E)-2-(2-carboxylatoethyl)-3-methyl-6-oxocyclohex-1-ene-1-carboxyl-CoA (COCHEA-CoA) to 6-methyl-3,7-dioxodecanedioyl-CoA (MeDODA-CoA). This Mycobacterium tuberculosis (strain CDC 1551 / Oshkosh) protein is Cholesterol ring-cleaving hydrolase IpdA subunit.